The sequence spans 338 residues: mRNA decay activator protein ZFP36L1 (338 aa).

The interval 1–111 is necessary and sufficient for the association with mRNA decay enzymes and mRNA decay activation; it reads MTTTLVSATI…QKQPGGGQVN (111 aa). A Phosphoserine; by MAPKAPK2 modification is found at S54. S90 is subject to Phosphoserine; by PKB/AKT1. The residue at position 92 (S92) is a Phosphoserine; by PKB/AKT1 and MAPKAPK2. The disordered stretch occupies residues 93-113; it reads EGGERLLPTQKQPGGGQVNSS. 2 consecutive C3H1-type zinc fingers follow at residues 114-142 and 152-180; these read RYKT…HGIH and KYKT…HNAE. The tract at residues 185-338 is necessary for mRNA decay activation; the sequence is LAGARDLSAD…IFSRLSISDD (154 aa). The residue at position 203 (S203) is a Phosphoserine; by PKB/AKT1 and MAPKAPK2. A disordered region spans residues 273 to 338; it reads SPTTFLFRPM…IFSRLSISDD (66 aa). Over residues 296-318 the composition is skewed to low complexity; it reads QDSLSDQEGYLSSSSSSHSGSDS. The residue at position 318 (S318) is a Phosphoserine. S334 is modified (phosphoserine; by RPS6KA1).

As to quaternary structure, associates with the cytoplasmic CCR4-NOT deadenylase and RNA exosome complexes to trigger ARE-containing mRNA deadenylation and decay processes. Interacts with CNOT1. Interacts (via N-terminus) with CNOT6. Interacts with CNOT7; this interaction is inhibited in response to phorbol 12-myristate 13-acetate (PMA) treatment in a p38 MAPK-dependent manner. Interacts with DCP1A. Interacts (via N-terminus) with DCP2. Interacts (via N-terminus) with EXOSC2. Interacts with XRN1. Interacts (via phosphorylated form) with YWHAB; this interaction occurs in a protein kinase AKT1-dependent manner. Interacts (via phosphorylated form) with YWHAZ; this interaction occurs in a p38 MAPK- and AKT-signaling pathways. In terms of processing, phosphorylated. Phosphorylated by RPS6KA1 at Ser-334 upon phorbol 12-myristate 13-acetate (PMA) treatment; this phosphorylation results in dissociation of the CCR4-NOT deadenylase complex and induces p38 MAPK-mediated stabilization of the low-density lipoprotein receptor LDLR mRNA. Phosphorylated by protein kinase AKT1 at Ser-92 and Ser-203 in response to insulin; these phosphorylations stabilize ZFP36L1, increase the association with 14-3-3 proteins and mediate ARE-containing mRNA stabilization. AKT1-mediated phosphorylation at Ser-92 does not impair ARE-containing RNA-binding. Phosphorylated at Ser-54, Ser-92 and Ser-203 by MAPKAPK2; these phosphorylations increase the association with 14-3-3 proteins and mediate ARE-containing mRNA stabilization in a protein kinase AKT1-independent manner. MAPKAPK2-mediated phosphorylations at Ser-54, Ser-92 and Ser-203 do not impair ARE-containing RNA-binding. Phosphorylations increase the association with 14-3-3 proteins and mediate ARE-containing mRNA stabilization during early adipogenesis in a p38 MAPK- and AKT-dependent manner. Ubiquitinated. Ubiquitination leads to proteasomal degradation, a process inhibited by phosphorylations at Ser-90, Ser-92 and Ser-203. As to expression, expressed mainly in the basal epidermal layer, weakly in the suprabasal epidermal layers. Expressed in epidermal keratinocytes (at protein level). Expressed in osteoblasts.

It localises to the nucleus. It is found in the cytoplasm. The protein localises to the cytoplasmic granule. Its subcellular location is the P-body. Functionally, zinc-finger RNA-binding protein that destabilizes several cytoplasmic AU-rich element (ARE)-containing mRNA transcripts by promoting their poly(A) tail removal or deadenylation, and hence provide a mechanism for attenuating protein synthesis. Acts as a 3'-untranslated region (UTR) ARE mRNA-binding adapter protein to communicate signaling events to the mRNA decay machinery. Functions by recruiting the CCR4-NOT deadenylase complex and components of the cytoplasmic RNA decay machinery to the bound ARE-containing mRNAs, and hence promotes ARE-mediated mRNA deadenylation and decay processes. Also induces the degradation of ARE-containing mRNAs even in absence of poly(A) tail. Binds to 3'-UTR ARE of numerous mRNAs. Positively regulates early adipogenesis by promoting ARE-mediated mRNA decay of immediate early genes (IEGs). Promotes ARE-mediated mRNA decay of mineralocorticoid receptor NR3C2 mRNA in response to hypertonic stress. Negatively regulates hematopoietic/erythroid cell differentiation by promoting ARE-mediated mRNA decay of the transcription factor STAT5B mRNA. Positively regulates monocyte/macrophage cell differentiation by promoting ARE-mediated mRNA decay of the cyclin-dependent kinase CDK6 mRNA. Promotes degradation of ARE-containing pluripotency-associated mRNAs in embryonic stem cells (ESCs), such as NANOG, through a fibroblast growth factor (FGF)-induced MAPK-dependent signaling pathway, and hence attenuates ESC self-renewal and positively regulates mesendoderm differentiation. May play a role in mediating pro-apoptotic effects in malignant B-cells by promoting ARE-mediated mRNA decay of BCL2 mRNA. In association with ZFP36L2 maintains quiescence on developing B lymphocytes by promoting ARE-mediated decay of several mRNAs encoding cell cycle regulators that help B cells progress through the cell cycle, and hence ensuring accurate variable-diversity-joining (VDJ) recombination and functional immune cell formation. Together with ZFP36L2 is also necessary for thymocyte development and prevention of T-cell acute lymphoblastic leukemia (T-ALL) transformation by promoting ARE-mediated mRNA decay of the oncogenic transcription factor NOTCH1 mRNA. Participates in the delivery of target ARE-mRNAs to processing bodies (PBs). In addition to its cytosolic mRNA-decay function, plays a role in the regulation of nuclear mRNA 3'-end processing; modulates mRNA 3'-end maturation efficiency of the DLL4 mRNA through binding with an ARE embedded in a weak noncanonical polyadenylation (poly(A)) signal in endothelial cells. Also involved in the regulation of stress granule (SG) and P-body (PB) formation and fusion. Plays a role in vasculogenesis and endocardial development. Plays a role in the regulation of keratinocyte proliferation, differentiation and apoptosis. Plays a role in myoblast cell differentiation. The sequence is that of mRNA decay activator protein ZFP36L1 from Homo sapiens (Human).